The chain runs to 129 residues: uncharacterized protein (129 aa).

The first 17 residues, M1–A17, serve as a signal peptide directing secretion. Residues S26–S36 are compositionally biased toward low complexity. The interval S26 to R76 is disordered.

This is an uncharacterized protein from Escherichia coli O157:H7.